The primary structure comprises 921 residues: Valine--tRNA ligase (921 aa).

A 'HIGH' region motif is present at residues 40 to 50; it reads PNVTGSLHMGH. The short motif at 522 to 526 is the 'KMSKS' region element; it reads KMSKS. An ATP-binding site is contributed by K525. A coiled-coil region spans residues 849-921; that stretch reads MADLIDKEAE…LQHKNRIESL (73 aa).

This sequence belongs to the class-I aminoacyl-tRNA synthetase family. ValS type 1 subfamily. Monomer.

The protein localises to the cytoplasm. The catalysed reaction is tRNA(Val) + L-valine + ATP = L-valyl-tRNA(Val) + AMP + diphosphate. Its function is as follows. Catalyzes the attachment of valine to tRNA(Val). As ValRS can inadvertently accommodate and process structurally similar amino acids such as threonine, to avoid such errors, it has a 'posttransfer' editing activity that hydrolyzes mischarged Thr-tRNA(Val) in a tRNA-dependent manner. The protein is Valine--tRNA ligase of Legionella pneumophila (strain Paris).